Consider the following 228-residue polypeptide: DNA repair and recombination protein RadB (228 aa).

The protein belongs to the eukaryotic RecA-like protein family. RadB subfamily.

Involved in DNA repair and in homologous recombination. May regulate the cleavage reactions of the branch-structured DNA. Has a very weak ATPase activity that is not stimulated by DNA. Binds DNA but does not promote DNA strands exchange. This chain is DNA repair and recombination protein RadB, found in Thermococcus sibiricus (strain DSM 12597 / MM 739).